A 58-amino-acid chain; its full sequence is Small ribosomal subunit protein bS21 (58 aa).

Positions 39-58 (DKPSVKKRAKSKAAAKYRSR) are disordered. Residues 43–58 (VKKRAKSKAAAKYRSR) show a composition bias toward basic residues.

This sequence belongs to the bacterial ribosomal protein bS21 family.

In Chlamydia pneumoniae (Chlamydophila pneumoniae), this protein is Small ribosomal subunit protein bS21 (rpsU).